A 498-amino-acid chain; its full sequence is UDP-N-acetylmuramoyl-L-alanyl-D-glutamate--2,6-diaminopimelate ligase (498 aa).

UDP-N-acetyl-alpha-D-muramoyl-L-alanyl-D-glutamate is bound at residue S29. 120–126 (GTDGKTS) is an ATP binding site. UDP-N-acetyl-alpha-D-muramoyl-L-alanyl-D-glutamate contacts are provided by residues 162 to 163 (TT), S189, Q195, and R197. K229 bears the N6-carboxylysine mark. Meso-2,6-diaminopimelate contacts are provided by residues R392, 416 to 419 (DNPR), G466, and E470. The Meso-diaminopimelate recognition motif motif lies at 416–419 (DNPR).

This sequence belongs to the MurCDEF family. MurE subfamily. It depends on Mg(2+) as a cofactor. Carboxylation is probably crucial for Mg(2+) binding and, consequently, for the gamma-phosphate positioning of ATP.

Its subcellular location is the cytoplasm. It carries out the reaction UDP-N-acetyl-alpha-D-muramoyl-L-alanyl-D-glutamate + meso-2,6-diaminopimelate + ATP = UDP-N-acetyl-alpha-D-muramoyl-L-alanyl-gamma-D-glutamyl-meso-2,6-diaminopimelate + ADP + phosphate + H(+). The protein operates within cell wall biogenesis; peptidoglycan biosynthesis. In terms of biological role, catalyzes the addition of meso-diaminopimelic acid to the nucleotide precursor UDP-N-acetylmuramoyl-L-alanyl-D-glutamate (UMAG) in the biosynthesis of bacterial cell-wall peptidoglycan. The polypeptide is UDP-N-acetylmuramoyl-L-alanyl-D-glutamate--2,6-diaminopimelate ligase (Alkalilimnicola ehrlichii (strain ATCC BAA-1101 / DSM 17681 / MLHE-1)).